A 362-amino-acid chain; its full sequence is MKASILTKLETLVERYEEVQHLLGDPDVIGDQDKFRALSKEYSQLEEVTKCFQAYQQAQDDLAAAEEMAKEDDEEMREMAQEEIKDAKEAIERLADELQILLLPKDPNDDRNCFLEIRAGAGGDEAGIFAGDLFRMYSKYAEKRGWRIEVMSSNEAEHGGYKEMIAKVSGDGAYGVLKFESGGHRVQRVPATESQGRVHTSACTVAVMAEIPEADLPEIKAADLKIDTFRASGAGGQHVNTTDSAIRITHLPTGTVVECQDERSQHKNKAKAMAVLAARIVQAEQERRAAEVSDTRRNLLGSGDRSDRIRTYNYPQGRVSDHRINLTIYRLNEVMEGDLQSLIDPVVQEHQADQLAALAENA.

At Gln-237 the chain carries N5-methylglutamine.

This sequence belongs to the prokaryotic/mitochondrial release factor family. Post-translationally, methylated by PrmC. Methylation increases the termination efficiency of RF1.

It is found in the cytoplasm. Peptide chain release factor 1 directs the termination of translation in response to the peptide chain termination codons UAG and UAA. The chain is Peptide chain release factor 1 from Vibrio parahaemolyticus serotype O3:K6 (strain RIMD 2210633).